Reading from the N-terminus, the 453-residue chain is Pup--protein ligase (453 aa).

Glutamate 9 is a binding site for Mg(2+). Arginine 53 lines the ATP pocket. Mg(2+) is bound at residue tyrosine 55. Aspartate 57 functions as the Proton acceptor in the catalytic mechanism. Glutamate 63 is a Mg(2+) binding site. ATP-binding residues include threonine 66 and tryptophan 420.

The protein belongs to the Pup ligase/Pup deamidase family. Pup-conjugating enzyme subfamily.

The catalysed reaction is ATP + [prokaryotic ubiquitin-like protein]-L-glutamate + [protein]-L-lysine = ADP + phosphate + N(6)-([prokaryotic ubiquitin-like protein]-gamma-L-glutamyl)-[protein]-L-lysine.. Its pathway is protein degradation; proteasomal Pup-dependent pathway. It participates in protein modification; protein pupylation. Its function is as follows. Catalyzes the covalent attachment of the prokaryotic ubiquitin-like protein modifier Pup to the proteasomal substrate proteins, thereby targeting them for proteasomal degradation. This tagging system is termed pupylation. The ligation reaction involves the side-chain carboxylate of the C-terminal glutamate of Pup and the side-chain amino group of a substrate lysine. This chain is Pup--protein ligase, found in Kribbella flavida (strain DSM 17836 / JCM 10339 / NBRC 14399).